The chain runs to 711 residues: Ribosomal RNA large subunit methyltransferase K/L (711 aa).

Residues 43–154 (TLYRTLLWSR…RENLVISLDL (112 aa)) enclose the THUMP domain.

Belongs to the methyltransferase superfamily. RlmKL family.

The protein resides in the cytoplasm. The catalysed reaction is guanosine(2445) in 23S rRNA + S-adenosyl-L-methionine = N(2)-methylguanosine(2445) in 23S rRNA + S-adenosyl-L-homocysteine + H(+). The enzyme catalyses guanosine(2069) in 23S rRNA + S-adenosyl-L-methionine = N(2)-methylguanosine(2069) in 23S rRNA + S-adenosyl-L-homocysteine + H(+). Its function is as follows. Specifically methylates the guanine in position 2445 (m2G2445) and the guanine in position 2069 (m7G2069) of 23S rRNA. This Haemophilus influenzae (strain ATCC 51907 / DSM 11121 / KW20 / Rd) protein is Ribosomal RNA large subunit methyltransferase K/L.